Reading from the N-terminus, the 232-residue chain is 7-cyano-7-deazaguanine synthase (232 aa).

C7 to A17 is an ATP binding site. Zn(2+) contacts are provided by C185, C193, C196, and C199.

This sequence belongs to the QueC family. Zn(2+) is required as a cofactor.

The enzyme catalyses 7-carboxy-7-deazaguanine + NH4(+) + ATP = 7-cyano-7-deazaguanine + ADP + phosphate + H2O + H(+). It participates in purine metabolism; 7-cyano-7-deazaguanine biosynthesis. Functionally, catalyzes the ATP-dependent conversion of 7-carboxy-7-deazaguanine (CDG) to 7-cyano-7-deazaguanine (preQ(0)). The protein is 7-cyano-7-deazaguanine synthase of Brucella anthropi (strain ATCC 49188 / DSM 6882 / CCUG 24695 / JCM 21032 / LMG 3331 / NBRC 15819 / NCTC 12168 / Alc 37) (Ochrobactrum anthropi).